The chain runs to 211 residues: MYQPDFPTVPFRLGLYPVVDSVEWIERLLEAGVRTIQLRIKDKRDEEVEADVIAAIALGRRYDARLFINDYWRLAMKHNAYGVHLGQEDLETTDLKAIQAAGLRLGVSTHDDMEIDIALAAKPSYIALGHVFPTQTKQMPSAPQGLAQLVRHIERLADYPTVAIGGISLEHAPAVLATGVGSIAVVSAITQAADWRDATAQLLAIAGVGDE.

4-amino-2-methyl-5-(diphosphooxymethyl)pyrimidine contacts are provided by residues glutamine 37–lysine 41 and asparagine 69. Aspartate 70 and aspartate 89 together coordinate Mg(2+). A 4-amino-2-methyl-5-(diphosphooxymethyl)pyrimidine-binding site is contributed by serine 108. Threonine 134–threonine 136 contributes to the 2-[(2R,5Z)-2-carboxy-4-methylthiazol-5(2H)-ylidene]ethyl phosphate binding site. Lysine 137 provides a ligand contact to 4-amino-2-methyl-5-(diphosphooxymethyl)pyrimidine. 2-[(2R,5Z)-2-carboxy-4-methylthiazol-5(2H)-ylidene]ethyl phosphate is bound by residues glycine 166 and valine 186 to serine 187.

Belongs to the thiamine-phosphate synthase family. Requires Mg(2+) as cofactor.

It carries out the reaction 2-[(2R,5Z)-2-carboxy-4-methylthiazol-5(2H)-ylidene]ethyl phosphate + 4-amino-2-methyl-5-(diphosphooxymethyl)pyrimidine + 2 H(+) = thiamine phosphate + CO2 + diphosphate. The enzyme catalyses 2-(2-carboxy-4-methylthiazol-5-yl)ethyl phosphate + 4-amino-2-methyl-5-(diphosphooxymethyl)pyrimidine + 2 H(+) = thiamine phosphate + CO2 + diphosphate. It catalyses the reaction 4-methyl-5-(2-phosphooxyethyl)-thiazole + 4-amino-2-methyl-5-(diphosphooxymethyl)pyrimidine + H(+) = thiamine phosphate + diphosphate. The protein operates within cofactor biosynthesis; thiamine diphosphate biosynthesis; thiamine phosphate from 4-amino-2-methyl-5-diphosphomethylpyrimidine and 4-methyl-5-(2-phosphoethyl)-thiazole: step 1/1. Condenses 4-methyl-5-(beta-hydroxyethyl)thiazole monophosphate (THZ-P) and 2-methyl-4-amino-5-hydroxymethyl pyrimidine pyrophosphate (HMP-PP) to form thiamine monophosphate (TMP). The sequence is that of Thiamine-phosphate synthase from Salmonella paratyphi A (strain ATCC 9150 / SARB42).